A 74-amino-acid chain; its full sequence is Small ribosomal subunit protein uS15 (74 aa).

It belongs to the universal ribosomal protein uS15 family. Part of the 30S ribosomal subunit. Forms a bridge to the 50S subunit in the 70S ribosome, contacting the 23S rRNA.

One of the primary rRNA binding proteins, it binds directly to 16S rRNA where it helps nucleate assembly of the platform of the 30S subunit by binding and bridging several RNA helices of the 16S rRNA. Its function is as follows. Forms an intersubunit bridge (bridge B4) with the 23S rRNA of the 50S subunit in the ribosome. The sequence is that of Small ribosomal subunit protein uS15 from Aster yellows witches'-broom phytoplasma (strain AYWB).